A 332-amino-acid chain; its full sequence is tRNA(Ile)-lysidine synthase (332 aa).

Position 39–44 (39–44 (SGGADS)) interacts with ATP.

The protein belongs to the tRNA(Ile)-lysidine synthase family.

The protein resides in the cytoplasm. The enzyme catalyses cytidine(34) in tRNA(Ile2) + L-lysine + ATP = lysidine(34) in tRNA(Ile2) + AMP + diphosphate + H(+). In terms of biological role, ligates lysine onto the cytidine present at position 34 of the AUA codon-specific tRNA(Ile) that contains the anticodon CAU, in an ATP-dependent manner. Cytidine is converted to lysidine, thus changing the amino acid specificity of the tRNA from methionine to isoleucine. This Leifsonia xyli subsp. xyli (strain CTCB07) protein is tRNA(Ile)-lysidine synthase.